Reading from the N-terminus, the 291-residue chain is N-acetylmannosamine kinase (291 aa).

Residues 5 to 12 and 132 to 139 each bind ATP; these read AIDIGGTK and GVGGGVVS. His-156, Cys-166, Cys-168, and Cys-173 together coordinate Zn(2+).

Belongs to the ROK (NagC/XylR) family. NanK subfamily. As to quaternary structure, homodimer.

The enzyme catalyses an N-acyl-D-mannosamine + ATP = an N-acyl-D-mannosamine 6-phosphate + ADP + H(+). It participates in amino-sugar metabolism; N-acetylneuraminate degradation; D-fructose 6-phosphate from N-acetylneuraminate: step 2/5. In terms of biological role, catalyzes the phosphorylation of N-acetylmannosamine (ManNAc) to ManNAc-6-P. This is N-acetylmannosamine kinase from Escherichia coli O127:H6 (strain E2348/69 / EPEC).